The sequence spans 203 residues: MRLRNNKNAKLELESCENVIKNFPFKVEKNSTLEIGMGKGQMLIELAQKNPQKIFVGIEKYPTVALIAAKKAKKLELNNFFIIVDDVENALDFFEGTFDLIWLTFSDPWPKKRHYKRRLTYEKFLKIYSKILSENGLIKLKTDNDDFFQWTLESLEKNGLNIINKTSDLEKSEFAKDNVKTSYEQKFVSLGKNINFVEFSFKK.

S-adenosyl-L-methionine-binding residues include Glu-34, Glu-59, Asp-86, and Asp-107. Asp-107 is a catalytic residue. Substrate is bound by residues Lys-111, Asp-143, and 181–184; that span reads TSYE.

This sequence belongs to the class I-like SAM-binding methyltransferase superfamily. TrmB family.

It catalyses the reaction guanosine(46) in tRNA + S-adenosyl-L-methionine = N(7)-methylguanosine(46) in tRNA + S-adenosyl-L-homocysteine. The protein operates within tRNA modification; N(7)-methylguanine-tRNA biosynthesis. Its function is as follows. Catalyzes the formation of N(7)-methylguanine at position 46 (m7G46) in tRNA. In Mycoplasmopsis pulmonis (strain UAB CTIP) (Mycoplasma pulmonis), this protein is tRNA (guanine-N(7)-)-methyltransferase.